The primary structure comprises 213 residues: Large ribosomal subunit protein uL1 (213 aa).

This sequence belongs to the universal ribosomal protein uL1 family. As to quaternary structure, part of the 50S ribosomal subunit.

In terms of biological role, probably involved in E site tRNA release. Binds directly to 23S rRNA. Functionally, protein L1 is also a translational repressor protein, it controls the translation of its operon by binding to its mRNA. This Methanothermococcus thermolithotrophicus (Methanococcus thermolithotrophicus) protein is Large ribosomal subunit protein uL1.